The sequence spans 128 residues: Large ribosomal subunit protein eL31 (128 aa).

This sequence belongs to the eukaryotic ribosomal protein eL31 family.

The sequence is that of Large ribosomal subunit protein eL31 (RpL31) from Drosophila virilis (Fruit fly).